Reading from the N-terminus, the 120-residue chain is Spermidine export protein MdtJ (120 aa).

The next 4 membrane-spanning stretches (helical) occupy residues 1 to 21 (MFYW…TLSM), 31 to 51 (TGFI…SFAV), 54 to 74 (IALG…ITLF), and 81 to 101 (EALS…IALI).

It belongs to the drug/metabolite transporter (DMT) superfamily. Small multidrug resistance (SMR) (TC 2.A.7.1) family. MdtJ subfamily. As to quaternary structure, forms a complex with MdtI.

The protein resides in the cell inner membrane. Catalyzes the excretion of spermidine. The protein is Spermidine export protein MdtJ of Citrobacter koseri (strain ATCC BAA-895 / CDC 4225-83 / SGSC4696).